Here is a 481-residue protein sequence, read N- to C-terminus: Phloretin 4'-O-glucosyltransferase (481 aa).

His16 serves as the catalytic Proton acceptor. His16 is a binding site for an anthocyanidin. Positions 354, 369, 372, 373, 374, 377, 393, and 394 each coordinate UDP-alpha-D-glucose.

This sequence belongs to the UDP-glycosyltransferase family. As to expression, highly expressed in young leaves, at intermediate level in mature leaves and at low levels in flowers and fruits.

The enzyme catalyses phloretin + UDP-alpha-D-glucose = trilobatin + UDP + H(+). The catalysed reaction is (2S)-naringenin + UDP-alpha-D-glucose = (2S)-naringenin 7-O-beta-D-glucoside + UDP + H(+). In terms of biological role, glycosyltransferase that possesses phloretin 4'-O-glycosyltransferase activity. Converts phloretin to trilobatin (phloretin 4'-O-glucoside), a potential antioxidant. Can convert with low efficiency phlorizin and trilobatin to their corresponding di-O-glucosides. Can convert with low efficiency naringenin to naringenin-7-O-glucoside. Can convert with low efficiency quercetin to quercetin-7-O-glucoside. This is Phloretin 4'-O-glucosyltransferase from Malus domestica (Apple).